The sequence spans 463 residues: Dipeptidyl peptidase 1 (463 aa).

The N-terminal stretch at 1–24 (MGPWSGSRLVALLLLVYGAGSVRG) is a signal peptide. N-linked (GlcNAc...) asparagine glycosylation is found at Asn-29 and Asn-53. 2 disulfides stabilise this stretch: Cys-30/Cys-118 and Cys-54/Cys-136. A propeptide spanning residues 135 to 230 (ACFTGRKTGN…TAEIQKKILH (96 aa)) is cleaved from the precursor. N-linked (GlcNAc...) asparagine glycosylation occurs at Asn-144. 3 cysteine pairs are disulfide-bonded: Cys-255–Cys-298, Cys-291–Cys-331, and Cys-321–Cys-337. Cys-258 is an active-site residue. Residue Asn-276 is glycosylated (N-linked (GlcNAc...) asparagine). 2 residues coordinate chloride: Phe-302 and Tyr-304. Tyr-347 contributes to the chloride binding site. Active-site residues include His-405 and Asn-427.

Belongs to the peptidase C1 family. In terms of assembly, tetramer of heterotrimers consisting of exclusion domain, heavy- and light chains. Chloride serves as cofactor.

The protein localises to the lysosome. It catalyses the reaction Release of an N-terminal dipeptide, Xaa-Yaa-|-Zaa-, except when Xaa is Arg or Lys, or Yaa or Zaa is Pro.. In terms of biological role, thiol protease. Has dipeptidylpeptidase activity. Active against a broad range of dipeptide substrates composed of both polar and hydrophobic amino acids. Proline cannot occupy the P1 position and arginine cannot occupy the P2 position of the substrate. Can act as both an exopeptidase and endopeptidase. Activates serine proteases such as elastase, cathepsin G and granzymes A and B. The sequence is that of Dipeptidyl peptidase 1 (CTSC) from Bos taurus (Bovine).